The primary structure comprises 105 residues: NADH-quinone oxidoreductase subunit K (105 aa).

A run of 3 helical transmembrane segments spans residues 8 to 28, 33 to 53, and 65 to 85; these read VTNGLIFSTLLFVISVAGIII, ILILLMSIELMLLAVNTNFLI, and VFVFFIMAVAAAETAIGLAIV.

This sequence belongs to the complex I subunit 4L family. As to quaternary structure, NDH-1 is composed of 14 different subunits. Subunits NuoA, H, J, K, L, M, N constitute the membrane sector of the complex.

It is found in the cell inner membrane. It catalyses the reaction a quinone + NADH + 5 H(+)(in) = a quinol + NAD(+) + 4 H(+)(out). Its function is as follows. NDH-1 shuttles electrons from NADH, via FMN and iron-sulfur (Fe-S) centers, to quinones in the respiratory chain. The immediate electron acceptor for the enzyme in this species is believed to be ubiquinone. Couples the redox reaction to proton translocation (for every two electrons transferred, four hydrogen ions are translocated across the cytoplasmic membrane), and thus conserves the redox energy in a proton gradient. The protein is NADH-quinone oxidoreductase subunit K of Francisella philomiragia subsp. philomiragia (strain ATCC 25017 / CCUG 19701 / FSC 153 / O#319-036).